Here is a 61-residue protein sequence, read N- to C-terminus: Weak toxin CM-1c (61 aa).

Cystine bridges form between cysteine 3–cysteine 21, cysteine 14–cysteine 37, cysteine 41–cysteine 53, and cysteine 54–cysteine 59.

This sequence belongs to the three-finger toxin family. Short-chain subfamily. Orphan group VI sub-subfamily. Expressed by the venom gland.

The protein localises to the secreted. This is Weak toxin CM-1c from Hemachatus haemachatus (Rinkhals).